The chain runs to 445 residues: Ribosomal protein uS12 methylthiotransferase RimO (445 aa).

Residues 13 to 123 enclose the MTTase N-terminal domain; that stretch reads PRVGFVSLGC…VMAAIHHHLP (111 aa). Positions 22, 58, 87, 154, 158, and 161 each coordinate [4Fe-4S] cluster. One can recognise a Radical SAM core domain in the interval 140–377; that stretch reads LTPKHYAYLK…MQQQEIISKQ (238 aa). In terms of domain architecture, TRAM spans 380–445; that stretch reads AVKKGQQLRV…DIHDLWTEKI (66 aa).

It belongs to the methylthiotransferase family. RimO subfamily. It depends on [4Fe-4S] cluster as a cofactor.

It localises to the cytoplasm. The enzyme catalyses L-aspartate(89)-[ribosomal protein uS12]-hydrogen + (sulfur carrier)-SH + AH2 + 2 S-adenosyl-L-methionine = 3-methylsulfanyl-L-aspartate(89)-[ribosomal protein uS12]-hydrogen + (sulfur carrier)-H + 5'-deoxyadenosine + L-methionine + A + S-adenosyl-L-homocysteine + 2 H(+). Its function is as follows. Catalyzes the methylthiolation of an aspartic acid residue of ribosomal protein uS12. The polypeptide is Ribosomal protein uS12 methylthiotransferase RimO (Nitrosomonas eutropha (strain DSM 101675 / C91 / Nm57)).